A 47-amino-acid chain; its full sequence is Accessory gland peptide Acp33A (47 aa).

Positions 1-21 (MLPSKRVPFLFTIILFLAGLG) are cleaved as a signal peptide.

In terms of tissue distribution, main cells of accessory gland and seminal fluid.

It localises to the secreted. Its function is as follows. Responsible for physiological and behavioral changes in mated female flies. The sequence is that of Accessory gland peptide Acp33A (Acp33A) from Drosophila melanogaster (Fruit fly).